Consider the following 753-residue polypeptide: 5-methyltetrahydropteroyltriglutamate--homocysteine methyltransferase (753 aa).

5-methyltetrahydropteroyltri-L-glutamate contacts are provided by residues 17-20 and Lys-117; that span reads RELK. Residues 431–433 and Glu-484 each bind L-homocysteine; that span reads IGS. L-methionine contacts are provided by residues 431–433 and Glu-484; that span reads IGS. Residues 515–516 and Trp-561 each bind 5-methyltetrahydropteroyltri-L-glutamate; that span reads RC. Asp-599 lines the L-homocysteine pocket. An L-methionine-binding site is contributed by Asp-599. 5-methyltetrahydropteroyltri-L-glutamate is bound at residue Glu-605. Zn(2+) contacts are provided by His-641, Cys-643, and Glu-665. Residue His-694 is the Proton donor of the active site. Cys-726 serves as a coordination point for Zn(2+).

Belongs to the vitamin-B12 independent methionine synthase family. Zn(2+) is required as a cofactor.

The enzyme catalyses 5-methyltetrahydropteroyltri-L-glutamate + L-homocysteine = tetrahydropteroyltri-L-glutamate + L-methionine. It functions in the pathway amino-acid biosynthesis; L-methionine biosynthesis via de novo pathway; L-methionine from L-homocysteine (MetE route): step 1/1. Functionally, catalyzes the transfer of a methyl group from 5-methyltetrahydrofolate to homocysteine resulting in methionine formation. The sequence is that of 5-methyltetrahydropteroyltriglutamate--homocysteine methyltransferase from Cronobacter sakazakii (strain ATCC BAA-894) (Enterobacter sakazakii).